The following is a 306-amino-acid chain: Ribonuclease Z (306 aa).

Residues His-63, His-65, Asp-67, His-68, His-141, Asp-211, and His-269 each coordinate Zn(2+). Asp-67 acts as the Proton acceptor in catalysis.

The protein belongs to the RNase Z family. As to quaternary structure, homodimer. Zn(2+) serves as cofactor.

It carries out the reaction Endonucleolytic cleavage of RNA, removing extra 3' nucleotides from tRNA precursor, generating 3' termini of tRNAs. A 3'-hydroxy group is left at the tRNA terminus and a 5'-phosphoryl group is left at the trailer molecule.. Functionally, zinc phosphodiesterase, which displays some tRNA 3'-processing endonuclease activity. Probably involved in tRNA maturation, by removing a 3'-trailer from precursor tRNA. This chain is Ribonuclease Z, found in Staphylococcus aureus (strain USA300).